A 762-amino-acid chain; its full sequence is Putative cation exchanger YDL206W (762 aa).

The signal sequence occupies residues 1-26 (MHKPLRWLITIAFYVSNVILIGYSLS). Residues 27 to 30 (SNGS) lie on the Extracellular side of the membrane. An N-linked (GlcNAc...) asparagine glycan is attached at N28. A helical membrane pass occupies residues 31–51 (ISEFYLHSVVLIECFSLLGVV). The Cytoplasmic segment spans residues 52–102 (TSDCLTPSLSYISSNIFHISDRVSGMTLLALGNALPDITSTYQSMKSGVTS). A helical transmembrane segment spans residues 103–123 (LAIGELFGGIFFLLTVVIGLM). The Extracellular segment spans residues 124–156 (GCVATIQFQHDKSIETYTEESFDQNLSYDRSNY). A glycan (N-linked (GlcNAc...) asparagine) is linked at N148. The chain crosses the membrane as a helical span at residues 157-177 (ILDVGIFTFMLLVSGTFLADG). Position 178 (R178) is a topological domain, cytoplasmic. Residues 179 to 199 (LYFWECIVMVLTYCCCAVYLI) form a helical membrane-spanning segment. Over 200-501 (KSYKYPCEIN…YNYLTDVSLE (302 aa)) the chain is Extracellular. Residues N280 and N329 are each glycosylated (N-linked (GlcNAc...) asparagine). Residues 502–522 (IGFFEFLSLLVTTPVSIILYL) traverse the membrane as a helical segment. The Cytoplasmic segment spans residues 523 to 554 (SIPSEISQTDHDLPLSYLQNIQLIASPIILNQ). Residues 555–575 (LITNNFSFWLLILSLVIAILL) form a helical membrane-spanning segment. Topologically, residues 576–589 (YFKTRTIPNKFNSD) are extracellular. Residues 590–610 (IIFTVAFLLSLACLSKAVHII) traverse the membrane as a helical segment. Topologically, residues 611–615 (VVTLT) are cytoplasmic. The chain crosses the membrane as a helical span at residues 616–636 (HWINVFNISETILGLTIFTWG). Residues 637 to 650 (NSIGDLVSNITFVK) are Extracellular-facing. N645 carries N-linked (GlcNAc...) asparagine glycosylation. Residues 651-671 (IGVLEIAIGACFGSPLLYFLF) traverse the membrane as a helical segment. Over 672 to 709 (GVGFDGIMIMLGDKTGKIVSGRDSNILMHHIDFKVDKN) the chain is Cytoplasmic. The chain crosses the membrane as a helical span at residues 710–730 (LINTGVGILIAFLIFTVLIPL). Residues 731–738 (NDWKIDKK) are Extracellular-facing. Residues 739 to 759 (ISIALLTLYIVVTCISVFLEV) form a helical membrane-spanning segment. The Cytoplasmic portion of the chain corresponds to 760–762 (HQV).

It belongs to the Ca(2+):cation antiporter (CaCA) (TC 2.A.19) family.

Its subcellular location is the membrane. Putative cation exchanger. This Saccharomyces cerevisiae (strain ATCC 204508 / S288c) (Baker's yeast) protein is Putative cation exchanger YDL206W.